Consider the following 350-residue polypeptide: Probable arabinogalactan endo-beta-1,4-galactanase A (350 aa).

Residues 1-16 form the signal peptide; that stretch reads MIYPLLLSALPLLSSA. N-linked (GlcNAc...) asparagine glycosylation is present at Asn128. The Proton donor role is filled by Glu152. Residue Glu262 is the Nucleophile of the active site.

This sequence belongs to the glycosyl hydrolase 53 family.

The protein localises to the secreted. The enzyme catalyses The enzyme specifically hydrolyzes (1-&gt;4)-beta-D-galactosidic linkages in type I arabinogalactans.. Its function is as follows. Endogalactanase involved in the degradation of plant cell wall polysaccharides, and more particularly of hairy regions of pectin. This Aspergillus tubingensis protein is Probable arabinogalactan endo-beta-1,4-galactanase A (galA).